The chain runs to 71 residues: Small ribosomal subunit protein bS21 (71 aa).

A disordered region spans residues Glu-48 to Tyr-71. Residues Asn-60–Tyr-71 are compositionally biased toward basic and acidic residues.

The protein belongs to the bacterial ribosomal protein bS21 family.

This is Small ribosomal subunit protein bS21 from Haemophilus influenzae (strain 86-028NP).